The chain runs to 187 residues: MATPEFDLGDIKRRMQGAVSSLSKDLGSLRTGRATPSLLDPIQVEAYGASMPMAQVATVSVPEPRLLSISVWDRSMVTNVEKAIRESDLGLNPMTEGQTIRLRIPEMNEQRRKEMVKVAHKYTEEARVAVRHVRRDGLDILKKLEKDGAISEDDEKRQAGEVQKATDDAIAEIDGVLASKEKEIMQV.

Belongs to the RRF family.

It is found in the cytoplasm. In terms of biological role, responsible for the release of ribosomes from messenger RNA at the termination of protein biosynthesis. May increase the efficiency of translation by recycling ribosomes from one round of translation to another. This is Ribosome-recycling factor from Methylorubrum populi (strain ATCC BAA-705 / NCIMB 13946 / BJ001) (Methylobacterium populi).